A 603-amino-acid chain; its full sequence is F-box only protein 46 (603 aa).

A disordered region spans residues Tyr-20 to Glu-54. Ser-21 and Ser-67 each carry phosphoserine. Disordered regions lie at residues Gly-111–Ser-163, Glu-235–Lys-301, Glu-332–Cys-359, and Thr-396–Asp-442. A Phosphothreonine modification is found at Thr-347. A compositionally biased stretch (pro residues) spans Thr-347–Ala-356. The 53-residue stretch at Arg-470 to Asp-522 folds into the F-box domain.

In terms of assembly, part of a SCF (SKP1-cullin-F-box) protein ligase complex SCF(FBXO46) composed of CUL1, SKP1, RBX1 and FBXO46. Phosphorylated by ATM in response to DNA damage, promoting ubiquitination and degradation by the SCF(FBXO31) complex. Post-translationally, ATM-phosphorylated FBXO46 is ubiquitinated and degradaded by the SCF(FBXO31) complex in response to DNA damage.

Its pathway is protein modification; protein ubiquitination. Its function is as follows. Substrate-recognition component of the SCF(FBXO46) protein ligase complex, which mediates the ubiquitination and degradation of target proteins. In absence of stress, the SCF(FBXO46) complex catalyzes ubiquitination and degradation of MTOR-phosphorylated FBXO31. The polypeptide is F-box only protein 46 (Fbxo46) (Rattus norvegicus (Rat)).